Reading from the N-terminus, the 133-residue chain is Ribosome-binding factor A (133 aa).

Belongs to the RbfA family. In terms of assembly, monomer. Binds 30S ribosomal subunits, but not 50S ribosomal subunits or 70S ribosomes.

It is found in the cytoplasm. One of several proteins that assist in the late maturation steps of the functional core of the 30S ribosomal subunit. Associates with free 30S ribosomal subunits (but not with 30S subunits that are part of 70S ribosomes or polysomes). Required for efficient processing of 16S rRNA. May interact with the 5'-terminal helix region of 16S rRNA. The sequence is that of Ribosome-binding factor A from Psychromonas ingrahamii (strain DSM 17664 / CCUG 51855 / 37).